The sequence spans 97 residues: MICOS complex subunit MIC12 (97 aa).

A helical membrane pass occupies residues 7–24 (LTSITAVSSTLAASYYFY).

It belongs to the MICOS complex subunit Mic12 family. In terms of assembly, component of the mitochondrial contact site and cristae organizing system (MICOS) complex.

Its subcellular location is the mitochondrion inner membrane. Functionally, component of the MICOS complex, a large protein complex of the mitochondrial inner membrane that plays crucial roles in the maintenance of crista junctions, inner membrane architecture, and formation of contact sites to the outer membrane. This Zygosaccharomyces rouxii (strain ATCC 2623 / CBS 732 / NBRC 1130 / NCYC 568 / NRRL Y-229) protein is MICOS complex subunit MIC12 (AIM5).